The primary structure comprises 506 residues: GPI mannosyltransferase 3 (506 aa).

The N-linked (GlcNAc...) asparagine glycan is linked to N115. 6 helical membrane passes run 180–200 (AFAC…LLFW), 229–249 (YGRL…NIIA), 257–277 (FVFP…SSLY), 285–305 (YLSQ…LLTM), 330–350 (FVYP…SSFS), and 358–378 (FFFL…RFHQ). N395 is a glycosylation site (N-linked (GlcNAc...) asparagine).

This sequence belongs to the glycosyltransferase 22 family. PIGB subfamily.

Its subcellular location is the endoplasmic reticulum membrane. Its pathway is glycolipid biosynthesis; glycosylphosphatidylinositol-anchor biosynthesis. Its function is as follows. Mannosyltransferase involved in glycosylphosphatidylinositol-anchor biosynthesis. Transfers the third mannose to Man2-GlcN-acyl-PI during GPI precursor assembly. This is GPI mannosyltransferase 3 (gpi10) from Schizosaccharomyces pombe (strain 972 / ATCC 24843) (Fission yeast).